The chain runs to 303 residues: Zinc transporter ZIP9-B (303 aa).

A helical transmembrane segment spans residues 7–27 (ISLLSLAMLVGCYVSGIIPLA). N-linked (GlcNAc...) asparagine glycosylation is present at Asn-29. A run of 5 helical transmembrane segments spans residues 35 to 55 (LKLV…AVIV), 102 to 122 (AYIG…DQIG), 142 to 162 (ITTT…LGAA), 172 to 192 (LIVF…LVSF), and 206 to 226 (HLLV…LGLS). An N-linked (GlcNAc...) asparagine glycan is attached at Asn-237. The next 2 membrane-spanning stretches (helical) occupy residues 240-260 (GVAM…HVLP) and 282-302 (LEVC…IGHQ).

It belongs to the ZIP transporter (TC 2.A.5) family.

The protein resides in the golgi apparatus. It localises to the trans-Golgi network membrane. Its subcellular location is the cell membrane. The protein localises to the cytoplasm. It is found in the perinuclear region. The protein resides in the mitochondrion. It localises to the nucleus. It carries out the reaction Zn(2+)(in) = Zn(2+)(out). Transports zinc ions across cell and organelle membranes into the cytoplasm and regulates intracellular zinc homeostasis. Participates in the zinc ions efflux out of the secretory compartments. Regulates intracellular zinc level, resulting in the enhancement of AKT1 and MAPK3/MAPK1 (Erk1/2) phosphorylation in response to the BCR activation. Also functions as a membrane androgen receptor that mediates, through a G protein, the non-classical androgen signaling pathway, characterized by the activation of MAPK3/MAPK1 (Erk1/2) and transcription factors CREB1 or ATF1. Moreover, has dual functions as a membrane-bound androgen receptor and as an androgen-dependent zinc transporter both of which are mediated through an inhibitory G protein (Gi) that mediates both MAP kinase and zinc signaling leading to the androgen-dependent apoptotic process. This is Zinc transporter ZIP9-B (slc39a9-b) from Xenopus laevis (African clawed frog).